The sequence spans 575 residues: Hemagglutinin-neuraminidase (575 aa).

A compositionally biased stretch (basic and acidic residues) spans 1-10; sequence MDGDRGKRDS. The segment at 1–27 is disordered; that stretch reads MDGDRGKRDSYWSTSPSGSTTKPASGW. The Intravirion segment spans residues 1–37; sequence MDGDRGKRDSYWSTSPSGSTTKPASGWERSSKADTWL. Positions 10 to 14 are incorporation in virion; it reads SYWST. The span at 11–23 shows a compositional bias: polar residues; sequence YWSTSPSGSTTKP. Residues 38 to 58 form a helical; Signal-anchor for type II membrane protein membrane-spanning segment; sequence LILSFTQWALSIATVIICIII. An interaction with F protein region spans residues 59–140; it reads SARQGYSMKE…RQELTQHCES (82 aa). At 59–575 the chain is on the virion surface side; the sequence is SARQGYSMKE…SIPKLCKAES (517 aa). Residue Asn-77 is glycosylated (N-linked (GlcNAc...) asparagine; by host). 4 disulfide bridges follow: Cys-192–Cys-216, Cys-258–Cys-271, Cys-357–Cys-469, and Cys-463–Cys-473. Positions 254 to 259 are involved in neuraminidase activity; it reads NRKSCS. Asn-499 and Asn-511 each carry an N-linked (GlcNAc...) asparagine; by host glycan. The cysteines at positions 535 and 544 are disulfide-linked.

This sequence belongs to the paramyxoviruses hemagglutinin-neuraminidase family. In terms of assembly, homotetramer; composed of disulfide-linked homodimers. Interacts with F protein trimer. N-glycosylated; glycans consist of a mixture of high mannose-type oligosaccharides and of complex-type oligosaccharides.

It is found in the virion membrane. The protein localises to the host cell membrane. The catalysed reaction is Hydrolysis of alpha-(2-&gt;3)-, alpha-(2-&gt;6)-, alpha-(2-&gt;8)- glycosidic linkages of terminal sialic acid residues in oligosaccharides, glycoproteins, glycolipids, colominic acid and synthetic substrates.. Attaches the virus to sialic acid-containing cell receptors and thereby initiating infection. Binding of HN protein to the receptor induces a conformational change that allows the F protein to trigger virion/cell membranes fusion. In terms of biological role, neuraminidase activity ensures the efficient spread of the virus by dissociating the mature virions from the neuraminic acid containing glycoproteins. The chain is Hemagglutinin-neuraminidase (HN) from Sendai virus (strain Z) (SeV).